A 360-amino-acid chain; its full sequence is Carbamoyl phosphate synthase small chain (360 aa).

The segment at 1 to 169 is CPSase; sequence MTKRLLILED…TKTAYPAPGI (169 aa). L-glutamine is bound by residues S46, G220, and G222. The Glutamine amidotransferase type-1 domain occupies 172-358; that stretch reads NIVLVDFGLK…LEMIDSWRCT (187 aa). C247 (nucleophile) is an active-site residue. L-glutamine contacts are provided by M248, Q251, N289, G291, and Y292. Active-site residues include H331 and D333.

It belongs to the CarA family. As to quaternary structure, composed of two chains; the small (or glutamine) chain promotes the hydrolysis of glutamine to ammonia, which is used by the large (or ammonia) chain to synthesize carbamoyl phosphate. Tetramer of heterodimers (alpha,beta)4.

The catalysed reaction is hydrogencarbonate + L-glutamine + 2 ATP + H2O = carbamoyl phosphate + L-glutamate + 2 ADP + phosphate + 2 H(+). The enzyme catalyses L-glutamine + H2O = L-glutamate + NH4(+). The protein operates within amino-acid biosynthesis; L-arginine biosynthesis; carbamoyl phosphate from bicarbonate: step 1/1. It participates in pyrimidine metabolism; UMP biosynthesis via de novo pathway; (S)-dihydroorotate from bicarbonate: step 1/3. Functionally, small subunit of the glutamine-dependent carbamoyl phosphate synthetase (CPSase). CPSase catalyzes the formation of carbamoyl phosphate from the ammonia moiety of glutamine, carbonate, and phosphate donated by ATP, constituting the first step of 2 biosynthetic pathways, one leading to arginine and/or urea and the other to pyrimidine nucleotides. The small subunit (glutamine amidotransferase) binds and cleaves glutamine to supply the large subunit with the substrate ammonia. This chain is Carbamoyl phosphate synthase small chain, found in Streptococcus pyogenes serotype M3 (strain SSI-1).